The chain runs to 777 residues: MEVHIGLGGVYKQPPGKMIRGAFENLFLSVREALQGERRSAASLDTSSPISACVHPHPTWNEPSTWTEVRGTPWREPQGAQPDPPPCSPRSQAPQFTLSSCTTELKEILGEQGGMPEEGNSESASKEGYPESISDSAKEICKAVSVSLGLSMEALEHLSAAGEWQRGDCMFAGPPHHTMGAQTCQVAEEDKSDTSFSQYREGAFRRAGQSTYSAGKAPEDGSSLPTEDKEQPCTDMALSEPGSLRSRGMEVMPSLTLYKPTAFMEDASAYPGRDYYSFQMALAPHGRIKVESPIEFAGSAWGGPSRYSEFPGFSHCGPSANWHSLFEEGQATASYTDSSLYSYPRSHVPAGPDGEFSAEAWYPATAMLGRVHMAVPMRPRMTHGWTATLGIRRRLGWTGVESTFYPIDYYFPPQKPCLSCEDEASGCHYEALTCGSCKVFFKRAAEGNQKYLCASRNDCTIDKFRRKNCPSCRLRKCYEAGMTLGARKLKKLGNLKAQEELEGSPGQSEGREMPPNMSIPQLEGYSCQPIFLNVLEAIEPMVVCSGHDNNQPDSFALLLSSLNELGERQLVHVVKWAKALPGFRNLHVNDQMTVIQYSWMGLMIFAMGWRSFKNVNSRMLYFAPDLVFNEYRMHKSRMYSQCVRMRHLSQEFGWLQVTPEEFLCDEGPSALSIIPVEGLKDQKCFDELRMNYIKELDRVISCKRNNPASSSPRFFNLPKLLGSVQPIDVNLVQFTFGLFGKAQMVSVDFPEMMSEIISVQVPKILSGRVKPLYFHSS.

Positions 1 to 416 are modulating; that stretch reads MEVHIGLGGV…IDYYFPPQKP (416 aa). Disordered regions lie at residues 53–95, 110–132, and 205–241; these read CVHP…QAPQ, GEQGGMPEEGNSESASKEGYPES, and RRAGQSTYSAGKAPEDGSSLPTEDKEQPCTDMALSEP. NR C4-type zinc fingers lie at residues 417–434 and 453–472; these read CLSCEDEASGCHYEALTC and CASRNDCTIDKFRRKNCPSC. The nuclear receptor DNA-binding region spans 417-489; sequence CLSCEDEASG…AGMTLGARKL (73 aa). The 232-residue stretch at 526–757 folds into the NR LBD domain; that stretch reads SCQPIFLNVL…DFPEMMSEII (232 aa). Residues asparagine 563, arginine 610, and threonine 735 each coordinate 17beta-hydroxy-5alpha-androstan-3-one.

Belongs to the nuclear hormone receptor family. NR3 subfamily. As to quaternary structure, binds DNA as a homodimer. Interacts via the ligand-binding domain with LXXLL and FXXLF motifs from coactivator proteins. Interacts (via ligand-binding domain) with TRIM68. Detected in somatic Leydig and Sertoli cells in testis with high level expression. Also detected at lower expression levels in forebrain and heart.

It is found in the nucleus. The protein localises to the cytoplasm. In terms of biological role, steroid hormone receptors are ligand-activated transcription factors that regulate eukaryotic gene expression and affect cellular proliferation and differentiation in target tissues. Transcription factor activity is modulated by bound coactivator and corepressor proteins. This Aquarana catesbeiana (American bullfrog) protein is Androgen receptor (ar).